Consider the following 182-residue polypeptide: Protein LURP-one-related 7 (182 aa).

This sequence belongs to the LOR family.

Its function is as follows. Might be related to the phospholipid scramblase and tubby-like superfamily of membrane tethered transcription factors. The protein is Protein LURP-one-related 7 of Arabidopsis thaliana (Mouse-ear cress).